The sequence spans 214 residues: GTP cyclohydrolase 1 (214 aa).

Residues Cys-101, His-104, and Cys-172 each contribute to the Zn(2+) site.

This sequence belongs to the GTP cyclohydrolase I family. In terms of assembly, toroid-shaped homodecamer, composed of two pentamers of five dimers.

The enzyme catalyses GTP + H2O = 7,8-dihydroneopterin 3'-triphosphate + formate + H(+). Its pathway is cofactor biosynthesis; 7,8-dihydroneopterin triphosphate biosynthesis; 7,8-dihydroneopterin triphosphate from GTP: step 1/1. This is GTP cyclohydrolase 1 from Gloeobacter violaceus (strain ATCC 29082 / PCC 7421).